The following is a 389-amino-acid chain: Chalcone synthase 2 (389 aa).

The active site involves cysteine 164.

The protein belongs to the thiolase-like superfamily. Chalcone/stilbene synthases family.

It catalyses the reaction (E)-4-coumaroyl-CoA + 3 malonyl-CoA + 3 H(+) = 2',4,4',6'-tetrahydroxychalcone + 3 CO2 + 4 CoA. The protein operates within secondary metabolite biosynthesis; flavonoid biosynthesis. Its function is as follows. The primary product of this enzyme is 4,2',4',6'-tetrahydroxychalcone (also termed naringenin-chalcone or chalcone) which can under specific conditions spontaneously isomerize into naringenin. The sequence is that of Chalcone synthase 2 (CHS2) from Pisum sativum (Garden pea).